Consider the following 335-residue polypeptide: MCPQKLTISWFAIVLLVSPLMAMWELEKDVYVVEVDWTPDAPGETVNLTCDTPEEDDITWTSDQRHGVIGSGKTLTITVKEFLDAGQYTCHKGGETLSHSHLLLHKKENGIWSTEILKNFKNKTFLKCEAPNYSGRFTCSWLVQRNMDLKFNIKSSSSSPDSRAVTCGMASLSAEKVTLDQRDYEKYSVSCQEDVTCPTAEETLPIELALEARQQNKYENYSTSFFIRDIIKPDPPKNLQMKPLKNSQVEVSWEYPDSWSTPHSYFSLKFFVRIQRKKEKMKETEEGCNQKGAFLVEKTSTEVQCKGGNVCVQAQDRYYNSSCSKWACVPCRVRS.

An N-terminal signal peptide occupies residues 1 to 22 (MCPQKLTISWFAIVLLVSPLMA). Positions 23–106 (MWELEKDVYV…LSHSHLLLHK (84 aa)) constitute an Ig-like C2-type domain. N-linked (GlcNAc...) asparagine glycosylation occurs at Asn47. Cys50 and Cys90 are oxidised to a cystine. N-linked (GlcNAc...) asparagine glycans are attached at residues Asn122, Asn132, and Asn220. Residues 233–324 (PDPPKNLQMK…QDRYYNSSCS (92 aa)) form the Fibronectin type-III domain.

This sequence belongs to the IL-12B family. Heterodimer with IL12A; disulfide-linked. The heterodimer is known as interleukin IL-12. Heterodimer with IL23A; disulfide-linked. The heterodimer is known as interleukin IL-23. Also secreted as a monomer. Interacts with NBR1; this interaction promotes IL-12 secretion.

It localises to the secreted. Functionally, cytokine that can act as a growth factor for activated T and NK cells, enhance the lytic activity of NK/lymphokine-activated killer cells, and stimulate the production of IFN-gamma by resting PBMC. Associates with IL23A to form the IL-23 interleukin, a heterodimeric cytokine which functions in innate and adaptive immunity. IL-23 may constitute with IL-17 an acute response to infection in peripheral tissues. IL-23 binds to a heterodimeric receptor complex composed of IL12RB1 and IL23R, activates the Jak-Stat signaling cascade, stimulates memory rather than naive T-cells and promotes production of pro-inflammatory cytokines. IL-23 induces autoimmune inflammation and thus may be responsible for autoimmune inflammatory diseases and may be important for tumorigenesis. This Mus musculus (Mouse) protein is Interleukin-12 subunit beta (Il12b).